We begin with the raw amino-acid sequence, 212 residues long: Ribosomal RNA large subunit methyltransferase E (212 aa).

S-adenosyl-L-methionine-binding residues include G57, W59, D77, D93, and D122. Catalysis depends on K162, which acts as the Proton acceptor.

The protein belongs to the class I-like SAM-binding methyltransferase superfamily. RNA methyltransferase RlmE family.

Its subcellular location is the cytoplasm. It catalyses the reaction uridine(2552) in 23S rRNA + S-adenosyl-L-methionine = 2'-O-methyluridine(2552) in 23S rRNA + S-adenosyl-L-homocysteine + H(+). Its function is as follows. Specifically methylates the uridine in position 2552 of 23S rRNA at the 2'-O position of the ribose in the fully assembled 50S ribosomal subunit. The protein is Ribosomal RNA large subunit methyltransferase E of Coxiella burnetii (strain RSA 331 / Henzerling II).